A 194-amino-acid chain; its full sequence is Peptidyl-tRNA hydrolase (194 aa).

Tyrosine 16 contacts tRNA. Histidine 21 acts as the Proton acceptor in catalysis. TRNA is bound by residues phenylalanine 67, asparagine 69, and asparagine 115.

It belongs to the PTH family. In terms of assembly, monomer.

The protein localises to the cytoplasm. It carries out the reaction an N-acyl-L-alpha-aminoacyl-tRNA + H2O = an N-acyl-L-amino acid + a tRNA + H(+). In terms of biological role, hydrolyzes ribosome-free peptidyl-tRNAs (with 1 or more amino acids incorporated), which drop off the ribosome during protein synthesis, or as a result of ribosome stalling. Catalyzes the release of premature peptidyl moieties from peptidyl-tRNA molecules trapped in stalled 50S ribosomal subunits, and thus maintains levels of free tRNAs and 50S ribosomes. The chain is Peptidyl-tRNA hydrolase from Colwellia psychrerythraea (strain 34H / ATCC BAA-681) (Vibrio psychroerythus).